The primary structure comprises 346 residues: MTTNTVTLQTAHIVSLGDIEEAKASIKPFIRRTPLIKSMYLSQSITKGNVFLKLENMQFTGSFKFRGASNKINHLTDEQKEKGIIAASAGNHAQGVALTAKLLGIDATIVMPETAPQAKQQATKGYGTKVILKGKNFNETRLYMEELAKENGMTIVHPYDDKFVMAGQGTIGLEILDDIWNVNTVIVPVGGGGLIAGIATALKSFNPSIHIIGVQSENVHGMAESFYKRDLTEHRVDSTIADGCDVKVPGEQTYEVVKHLVDEFILVIEEEIEHAMKDLMQRAKIITEGAGALPTAAILSGKINNKWLEDKNVVALVSGGNVDLTRVSGVIEHGLNIADTSKGVVG.

Residue 59–60 coordinates AMP; the sequence is FT. Residue lysine 64 is modified to N6-(pyridoxal phosphate)lysine. Residues glutamine 94, 125-126, and asparagine 321 contribute to the AMP site; that span reads GY.

It belongs to the serine/threonine dehydratase family. In terms of assembly, in the native structure, TdcB is in a dimeric form, whereas in the TdcB-AMP complex, it exists in a tetrameric form (dimer of dimers). It depends on pyridoxal 5'-phosphate as a cofactor.

It carries out the reaction L-threonine = 2-oxobutanoate + NH4(+). It participates in amino-acid degradation; L-threonine degradation via propanoate pathway; propanoate from L-threonine: step 1/4. Each protein molecule can bind up to four molecules of AMP, which act as an allosteric activator to the enzyme. In terms of biological role, catalyzes the anaerobic formation of alpha-ketobutyrate and ammonia from threonine in a two-step reaction. The first step involved a dehydration of threonine and a production of enamine intermediates (aminocrotonate), which tautomerizes to its imine form (iminobutyrate). Both intermediates are unstable and short-lived. The second step is the nonenzymatic hydrolysis of the enamine/imine intermediates to form 2-ketobutyrate and free ammonia. In the low water environment of the cell, the second step is accelerated by RidA. The polypeptide is L-threonine dehydratase catabolic TdcB (tdcB) (Staphylococcus aureus (strain bovine RF122 / ET3-1)).